The primary structure comprises 389 residues: 23S rRNA (uracil(747)-C(5))-methyltransferase RlmC (389 aa).

4 residues coordinate [4Fe-4S] cluster: C5, C13, C16, and C94. Q219, F248, E275, and N321 together coordinate S-adenosyl-L-methionine. C348 (nucleophile) is an active-site residue.

This sequence belongs to the class I-like SAM-binding methyltransferase superfamily. RNA M5U methyltransferase family. RlmC subfamily.

It catalyses the reaction uridine(747) in 23S rRNA + S-adenosyl-L-methionine = 5-methyluridine(747) in 23S rRNA + S-adenosyl-L-homocysteine + H(+). Catalyzes the formation of 5-methyl-uridine at position 747 (m5U747) in 23S rRNA. The polypeptide is 23S rRNA (uracil(747)-C(5))-methyltransferase RlmC (Mannheimia succiniciproducens (strain KCTC 0769BP / MBEL55E)).